The following is a 740-amino-acid chain: Melanoma-associated antigen D4 (740 aa).

Basic and acidic residues predominate over residues methionine 1–glutamate 11. Disordered stretches follow at residues methionine 1–glutamate 27, alanine 139–threonine 208, proline 242–lysine 298, and isoleucine 321–proline 377. The span at asparagine 14–glutamate 27 shows a compositional bias: acidic residues. Polar residues-rich tracts occupy residues histidine 141–alanine 155 and proline 162–leucine 175. A compositionally biased stretch (low complexity) spans alanine 185–serine 207. The span at isoleucine 321–proline 337 shows a compositional bias: low complexity. Residues aspartate 354–arginine 363 show a composition bias toward acidic residues. In terms of domain architecture, MAGE spans leucine 414 to alanine 612. Residues tryptophan 697 to threonine 722 are disordered.

As to quaternary structure, interacts with TRIM27.

Its function is as follows. May enhance ubiquitin ligase activity of RING-type zinc finger-containing E3 ubiquitin-protein ligases. Proposed to act through recruitment and/or stabilization of the Ubl-conjugating enzyme (E2) at the E3:substrate complex. In Bos taurus (Bovine), this protein is Melanoma-associated antigen D4 (MAGED4).